The sequence spans 146 residues: 3-dehydroquinate dehydratase (146 aa).

Tyrosine 23 acts as the Proton acceptor in catalysis. Asparagine 74, histidine 80, and aspartate 87 together coordinate substrate. Histidine 100 acts as the Proton donor in catalysis. Residues 101-102 and arginine 111 each bind substrate; that span reads IS.

It belongs to the type-II 3-dehydroquinase family. In terms of assembly, homododecamer.

It carries out the reaction 3-dehydroquinate = 3-dehydroshikimate + H2O. It participates in metabolic intermediate biosynthesis; chorismate biosynthesis; chorismate from D-erythrose 4-phosphate and phosphoenolpyruvate: step 3/7. Catalyzes a trans-dehydration via an enolate intermediate. The protein is 3-dehydroquinate dehydratase of Bacillus cereus (strain B4264).